Reading from the N-terminus, the 332-residue chain is MAAIKDSLLAQVAEVLPSSGHKVTIVGIGQVGMASAFSILAQNVSKEVCLIDVCADKLQGELMDLQHGSNFLKNPQITASTDFAASANSRLCIVTAGVRQKEGESRLSLVQRNTDILKNIIPKLVEYSPDTILLMVSNPVDIMTYVAWKLSGLPKNRVIGSGTNLDSSRFRFLMSQRLGVAPTSCHGWIIGEHGDSSVPVWSGVNIAGVRLRELNPILGTGEDPEKWNELHKQVVDSAYEVIKLKGYTSWAIGLSTASLASAILRNTSSVAAVSTSVLGEHGIDKDVFLSLPCVLNANGVTSVVKQILTPTEVEQLQKSANIMSDVQAGLKF.

NAD(+)-binding positions include 29–57 (GQVGMASAFSILAQNVSKEVCLIDVCADK) and Arg99. Arg106, Asn138, and Arg169 together coordinate substrate. Position 138 (Asn138) interacts with NAD(+). His193 serves as the catalytic Proton acceptor. Thr248 lines the substrate pocket.

The protein belongs to the LDH/MDH superfamily. LDH family. Homotetramer.

The protein localises to the cytoplasm. The enzyme catalyses (S)-lactate + NAD(+) = pyruvate + NADH + H(+). Its pathway is fermentation; pyruvate fermentation to lactate; (S)-lactate from pyruvate: step 1/1. In Drosophila melanogaster (Fruit fly), this protein is L-lactate dehydrogenase.